Reading from the N-terminus, the 2222-residue chain is DNA polymerase epsilon catalytic subunit A (2222 aa).

Residues 90–110 (ETLSSGSNGGGNSNDGERVTT) are disordered. Zn(2+) contacts are provided by Cys2108, Cys2111, Cys2130, and Cys2133. The CysA-type zinc-finger motif lies at 2108-2133 (CEYCFFISDIDFCKAAPESIFSCVRC). Positions 2164, 2167, 2179, and 2181 each coordinate [4Fe-4S] cluster. The CysB motif signature appears at 2164–2181 (CSRCHKVKRDYMSAHCPC).

Belongs to the DNA polymerase type-B family. As to quaternary structure, DNA polymerase epsilon is a heterotetramer consisting of POL2, DPB2, DPB3 and DPB4. [4Fe-4S] cluster is required as a cofactor.

The protein localises to the nucleus. It catalyses the reaction DNA(n) + a 2'-deoxyribonucleoside 5'-triphosphate = DNA(n+1) + diphosphate. Catalytic component of the DNA polymerase epsilon complex which participates in chromosomal DNA replication. Required during synthesis of the leading DNA strands at the replication fork, binds at/or near replication origins and moves along DNA with the replication fork. Has 3'-5' proofreading exonuclease activity that corrects errors arising during DNA replication. The chain is DNA polymerase epsilon catalytic subunit A (POL2) from Saccharomyces cerevisiae (strain ATCC 204508 / S288c) (Baker's yeast).